Here is a 696-residue protein sequence, read N- to C-terminus: Transcriptional regulatory protein pro1 (696 aa).

A disordered region spans residues 1–48; it reads MSTQSPNHHEDITKTSSVNMTTTTTTTKTKAAAKAGTNAAPKQKTQMH. A compositionally biased stretch (low complexity) spans 21 to 40; it reads TTTTTTTKTKAAAKAGTNAA. The zn(2)-C6 fungal-type DNA-binding region spans 55–82; sequence CYTCRLRRKKCDEGSPMCTACKHLGLCC. Residues 112 to 145 form a disordered region; the sequence is LSEKSSHTIQTSINTPPGLSHSLPTSATFSDPLD. A compositionally biased stretch (polar residues) spans 118 to 140; the sequence is HTIQTSINTPPGLSHSLPTSATF.

The protein resides in the nucleus. Its function is as follows. May be involved in fruiting body development. The sequence is that of Transcriptional regulatory protein pro1 (adv-1) from Neurospora crassa (strain ATCC 24698 / 74-OR23-1A / CBS 708.71 / DSM 1257 / FGSC 987).